A 110-amino-acid polypeptide reads, in one-letter code: Large ribosomal subunit protein uL22 (110 aa).

Belongs to the universal ribosomal protein uL22 family. In terms of assembly, part of the 50S ribosomal subunit.

This protein binds specifically to 23S rRNA; its binding is stimulated by other ribosomal proteins, e.g. L4, L17, and L20. It is important during the early stages of 50S assembly. It makes multiple contacts with different domains of the 23S rRNA in the assembled 50S subunit and ribosome. Its function is as follows. The globular domain of the protein is located near the polypeptide exit tunnel on the outside of the subunit, while an extended beta-hairpin is found that lines the wall of the exit tunnel in the center of the 70S ribosome. The protein is Large ribosomal subunit protein uL22 of Campylobacter fetus subsp. fetus (strain 82-40).